The chain runs to 388 residues: MEPSLATGGSETTRLVSARDRSSAGGGLRLKSLFTEPSEPLPEEPKLEGMAFHHCHKDPVPQSGLSPERVQARRQLYAACAVCFIFMAGEVVGGYLAHSLAIMTDAAHLLADIGSMLASLFSLWLSTRPATRTMTFGWHRSETLGALASVVSLWIVTGILLYLAFLRLLHSDYHIEAGAMLLTASIAVCANLLMAFVLHQTGAPHSHGSTGAEYAPLEEGHGYPMSLGNTSVRAAFVHVLGDLLQSFGVLAASILIYFKPQYKVADPISTFLFSICALGSTAPTLRDVLLVLMEGAPRSVEFEPVRDTLLSVPGVRATHDLHLWALTLTYHVASAHLAIDSTADPEAVLAEASSRLYSRFGFSSCTLQVEQYQPEMAQCLRCQEPSQA.

The tract at residues 1–41 is disordered; the sequence is MEPSLATGGSETTRLVSARDRSSAGGGLRLKSLFTEPSEPL. At 1–75 the chain is on the cytoplasmic side; the sequence is MEPSLATGGS…SPERVQARRQ (75 aa). S63 and S66 each carry phosphoserine. A helical membrane pass occupies residues 76–96; sequence LYAACAVCFIFMAGEVVGGYL. Residues 97-105 are Lumenal-facing; that stretch reads AHSLAIMTD. A helical transmembrane segment spans residues 106–126; that stretch reads AAHLLADIGSMLASLFSLWLS. Positions 108 and 112 each coordinate Zn(2+). Topologically, residues 127-145 are cytoplasmic; it reads TRPATRTMTFGWHRSETLG. A helical transmembrane segment spans residues 146-166; the sequence is ALASVVSLWIVTGILLYLAFL. Over 167-177 the chain is Lumenal; that stretch reads RLLHSDYHIEA. The chain crosses the membrane as a helical span at residues 178–198; that stretch reads GAMLLTASIAVCANLLMAFVL. Topologically, residues 199–235 are cytoplasmic; that stretch reads HQTGAPHSHGSTGAEYAPLEEGHGYPMSLGNTSVRAA. The chain crosses the membrane as a helical span at residues 236 to 256; the sequence is FVHVLGDLLQSFGVLAASILI. H238 and D242 together coordinate Zn(2+). At 257 to 263 the chain is on the lumenal side; it reads YFKPQYK. The helical transmembrane segment at 264–284 threads the bilayer; sequence VADPISTFLFSICALGSTAPT. Topologically, residues 285-388 are cytoplasmic; the sequence is LRDVLLVLME…CLRCQEPSQA (104 aa).

Belongs to the cation diffusion facilitator (CDF) transporter (TC 2.A.4) family. SLC30A subfamily. As to quaternary structure, homodimer. Homodimerization is negligible compared to the human protein. It could explain the lower efficiency of zinc transport. Interacts with TMEM163. In terms of tissue distribution, expression is restricted to brain (at protein level). In the brain, most abundant in hippocampus and cerebral cortex. The mRNA is also detected in testis, expression being restricted to germ cells and highest in pachytene spermatocytes and round spermatids.

It localises to the cytoplasmic vesicle. Its subcellular location is the secretory vesicle. The protein resides in the synaptic vesicle membrane. The protein localises to the synapse. It is found in the synaptosome. It localises to the late endosome membrane. Its subcellular location is the lysosome membrane. It carries out the reaction Zn(2+)(in) + 2 H(+)(out) = Zn(2+)(out) + 2 H(+)(in). In terms of biological role, probable proton-coupled zinc ion antiporter mediating the import of zinc from cytoplasm into synaptic vesicles and participating to cellular zinc ion homeostasis in the brain. The chain is Probable proton-coupled zinc antiporter SLC30A3 from Mus musculus (Mouse).